Consider the following 175-residue polypeptide: Auxin-responsive protein IAA28 (175 aa).

The tract at residues 1–39 is disordered; that stretch reads MEEEKRLELRLAPPCHQFTSNNNINGSKQKSSTKETSFL. The EAR-like (transcriptional repression) signature appears at 7-11; sequence LELRL. Over residues 17–39 the composition is skewed to polar residues; the sequence is QFTSNNNINGSKQKSSTKETSFL. Residues 80–161 form the PB1 domain; sequence ELYVKINMEG…TVKRLHVLKT (82 aa).

It belongs to the Aux/IAA family. Homodimers and heterodimers. Interacts with TPL. In terms of tissue distribution, in roots and inflorescence stems.

The protein localises to the nucleus. Functionally, aux/IAA proteins are short-lived transcriptional factors that function as repressors of early auxin response genes at low auxin concentrations. Repression is thought to result from the interaction with auxin response factors (ARFs), proteins that bind to the auxin-responsive promoter element (AuxRE). Formation of heterodimers with ARF proteins may alter their ability to modulate early auxin response genes expression. The sequence is that of Auxin-responsive protein IAA28 (IAA28) from Arabidopsis thaliana (Mouse-ear cress).